A 226-amino-acid polypeptide reads, in one-letter code: RING-H2 finger protein ATL75 (226 aa).

Residues L60–I80 form a helical membrane-spanning segment. An RING-type; atypical zinc finger spans residues C136–R178.

The protein belongs to the RING-type zinc finger family. ATL subfamily.

The protein resides in the membrane. It catalyses the reaction S-ubiquitinyl-[E2 ubiquitin-conjugating enzyme]-L-cysteine + [acceptor protein]-L-lysine = [E2 ubiquitin-conjugating enzyme]-L-cysteine + N(6)-ubiquitinyl-[acceptor protein]-L-lysine.. The protein operates within protein modification; protein ubiquitination. This chain is RING-H2 finger protein ATL75 (ATL75), found in Arabidopsis thaliana (Mouse-ear cress).